The sequence spans 117 residues: Large ribosomal subunit protein uL18 (117 aa).

This sequence belongs to the universal ribosomal protein uL18 family. As to quaternary structure, part of the 50S ribosomal subunit; part of the 5S rRNA/L5/L18/L25 subcomplex. Contacts the 5S and 23S rRNAs.

Functionally, this is one of the proteins that bind and probably mediate the attachment of the 5S RNA into the large ribosomal subunit, where it forms part of the central protuberance. The chain is Large ribosomal subunit protein uL18 from Blochmanniella pennsylvanica (strain BPEN).